The following is a 386-amino-acid chain: 5-hydroxytryptamine receptor 1B (386 aa).

The Extracellular segment spans residues 1–42; it reads MEEQGIQCAPPPPAASQTGVPLTNLSHNCSADGYIYQDSIAL. N-linked (GlcNAc...) asparagine glycosylation is found at asparagine 24 and asparagine 28. The helical transmembrane segment at 43–68 threads the bilayer; that stretch reads PWKVLLVALLALITLATTLSNAFVIA. Over 69-82 the chain is Cytoplasmic; the sequence is TVYRTRKLHTPANY. A helical membrane pass occupies residues 83–107; sequence LIASLAVTDLLVSILVMPISTMYTV. Over 108-115 the chain is Extracellular; it reads TGRWTLGQ. A helical membrane pass occupies residues 116–141; it reads VVCDFWLSSDITCCTASIMHLCVIAL. Cysteine 118 and cysteine 195 are oxidised to a cystine. The ergotamine site is built by aspartate 125 and threonine 130. Positions 142–144 match the DRY motif; important for ligand-induced conformation changes and signaling motif; it reads DRY. The Cytoplasmic portion of the chain corresponds to 142–161; it reads DRYWAITDAVEYSAKRTPKR. Residues 162–180 traverse the membrane as a helical segment; the sequence is AAIMIVLVWVFSISISLPP. The Extracellular segment spans residues 181 to 201; sequence FFWRQAKAEEEMLDCFVNTDH. Valine 197 lines the ergotamine pocket. A helical membrane pass occupies residues 202–225; sequence VLYTVYSTVGAFYLPTLLLIALYG. Residues 226 to 311 lie on the Cytoplasmic side of the membrane; the sequence is RIYVEARSRI…AARERKATKT (86 aa). Over residues 255-268 the composition is skewed to polar residues; the sequence is DSPGSTSSVTSINS. Positions 255-278 are disordered; the sequence is DSPGSTSSVTSINSRAPDVPSESG. A helical transmembrane segment spans residues 312 to 333; sequence LGIILGAFIVCWLPFFIISLVM. Residues 334–343 are Extracellular-facing; sequence PICKDACWFH. The helical transmembrane segment at 344–366 threads the bilayer; the sequence is MAIFDFFNWLGYLNSLINPIIYT. The short motif at 361–365 is the NPxxY motif; important for ligand-induced conformation changes and signaling element; that stretch reads NPIIY. Residues 367–386 lie on the Cytoplasmic side of the membrane; the sequence is MSNEDFKQAFHKLIRFKCAG. Cysteine 384 carries S-palmitoyl cysteine lipidation.

This sequence belongs to the G-protein coupled receptor 1 family. In terms of assembly, homodimer. Heterodimer with HTR1D. In terms of processing, phosphorylated. Desensitization of the receptor may be mediated by its phosphorylation. Post-translationally, palmitoylated. Predominantly expressed in striatum and Purkinje cells.

The protein resides in the cell membrane. G-protein coupled receptor for 5-hydroxytryptamine (serotonin). Also functions as a receptor for ergot alkaloid derivatives, various anxiolytic and antidepressant drugs and other psychoactive substances, such as lysergic acid diethylamide (LSD). Ligand binding causes a conformation change that triggers signaling via guanine nucleotide-binding proteins (G proteins) and modulates the activity of downstream effectors, such as adenylate cyclase. HTR1B is coupled to G(i)/G(o) G alpha proteins and mediates inhibitory neurotransmission by inhibiting adenylate cyclase activity. Arrestin family members inhibit signaling via G proteins and mediate activation of alternative signaling pathways. Regulates the release of 5-hydroxytryptamine, dopamine and acetylcholine in the brain, and thereby affects neural activity, nociceptive processing, pain perception, mood and behavior. Besides, plays a role in vasoconstriction of cerebral arteries. This Mus musculus (Mouse) protein is 5-hydroxytryptamine receptor 1B (Htr1b).